Consider the following 243-residue polypeptide: UPF0246 protein MGAS10750_Spy1880 (243 aa).

It belongs to the UPF0246 family.

In Streptococcus pyogenes serotype M4 (strain MGAS10750), this protein is UPF0246 protein MGAS10750_Spy1880.